The following is a 442-amino-acid chain: MEDPIKIIHKYKNNNGRIQYHINIFIGDIVDENCMRILRKIKNLDLYTSLTSLETREIDILEKNYGEYWYEKFFNSYHINNTKELTLKNSVRMRELRSLYTEEWVNRHFVNYKKRLETTIFNYEYVVKEDRERRSVKRHIRRQQDDVEELLDYRTTGHPLPPALNDEQYVMSRIESSVETDNWCADNLLEEQLTESELNRELKKLVSKQNLDYSTDKPEDSESEDIELEDSESEDSESEDIDQHGGQGPDDDEFNANFDDPQFDEFDFGNTEDEQNVKLFEMEVEQDLEDVDLLFNDIDETDKNSKLTTREIKEAISNEQYDRIGKKIVDFDESRDNSMFDENLKDVITKTYITNQYLFKDDTIKTIRDKICCGFKNSNKFGENTYIIPSHQYLWSEYTYQGKIDRVMIGQKWIIRNDILKLDVEPNTNTSVKKNSGEIYVF.

The tract at residues 211–269 (LDYSTDKPEDSESEDIELEDSESEDSESEDIDQHGGQGPDDDEFNANFDDPQFDEFDFG) is disordered. The segment covering 221 to 240 (SESEDIELEDSESEDSESED) has biased composition (acidic residues).

It is found in the virion. This is an uncharacterized protein from Acanthamoeba polyphaga (Amoeba).